The sequence spans 303 residues: Probable 5-dehydro-4-deoxyglucarate dehydratase (303 aa).

It belongs to the DapA family.

The enzyme catalyses 5-dehydro-4-deoxy-D-glucarate + H(+) = 2,5-dioxopentanoate + CO2 + H2O. It participates in carbohydrate acid metabolism; D-glucarate degradation; 2,5-dioxopentanoate from D-glucarate: step 2/2. The sequence is that of Probable 5-dehydro-4-deoxyglucarate dehydratase from Azotobacter vinelandii (strain DJ / ATCC BAA-1303).